The primary structure comprises 796 residues: Endonuclease MutS2 (796 aa).

339 to 346 (GPNTGGKT) contacts ATP. A disordered region spans residues 620–644 (EKLGDTDSSLVSKAKKNRKQHKPSD). Residues 721–796 (LNIIGKRVDE…DHGVTIVEFK (76 aa)) enclose the Smr domain.

This sequence belongs to the DNA mismatch repair MutS family. MutS2 subfamily. As to quaternary structure, homodimer. Binds to stalled ribosomes, contacting rRNA.

Functionally, endonuclease that is involved in the suppression of homologous recombination and thus may have a key role in the control of bacterial genetic diversity. Its function is as follows. Acts as a ribosome collision sensor, splitting the ribosome into its 2 subunits. Detects stalled/collided 70S ribosomes which it binds and splits by an ATP-hydrolysis driven conformational change. Acts upstream of the ribosome quality control system (RQC), a ribosome-associated complex that mediates the extraction of incompletely synthesized nascent chains from stalled ribosomes and their subsequent degradation. Probably generates substrates for RQC. The protein is Endonuclease MutS2 of Lachnoclostridium phytofermentans (strain ATCC 700394 / DSM 18823 / ISDg) (Clostridium phytofermentans).